The following is a 413-amino-acid chain: MNIYAVGGAIRDELLGVPVQDRDYVVVGATPEQMAAQGFRPVGKDFPVFLHPRTQEEYALARTERKTAAGYHGFQFHYAPDVTLDEDLARRDLTVNAMAREVSPEGELVGPVIDPFDGQADLRARVFRHVSDAFVEDPVRILRIARFAARFADFTVADETLALMRRMVDAGEVDALVPERVWQEIARGLMEAKPSRMFAVLRECGALARILPEVDALWGVPQRADYHPEVDTGVHVMMVVDYAAKQGYSLPVRFAALTHDLGKATTPADVLPRHVGHEGRSVDLLKPLCERLRVPNECRDLALVVAREHGNLHRVMEMGAAALVRLFERSDALRKPARFAEMLQACESDARGRLGLDAQPYPQAERLRVALAAARSVDAGAIARGIGNDTEKIKEAVHRARIEAVAQALEIGE.

Residues Gly8 and Arg11 each contribute to the ATP site. Residues Gly8 and Arg11 each coordinate CTP. Asp21 and Asp23 together coordinate Mg(2+). Residues Arg91, Arg143, and Arg146 each coordinate ATP. Residues Arg91, Arg143, and Arg146 each coordinate CTP. An HD domain is found at Thr232–Leu333.

The protein belongs to the tRNA nucleotidyltransferase/poly(A) polymerase family. Bacterial CCA-adding enzyme type 1 subfamily. In terms of assembly, monomer. Can also form homodimers and oligomers. Mg(2+) serves as cofactor. Requires Ni(2+) as cofactor.

The enzyme catalyses a tRNA precursor + 2 CTP + ATP = a tRNA with a 3' CCA end + 3 diphosphate. It catalyses the reaction a tRNA with a 3' CCA end + 2 CTP + ATP = a tRNA with a 3' CCACCA end + 3 diphosphate. Catalyzes the addition and repair of the essential 3'-terminal CCA sequence in tRNAs without using a nucleic acid template. Adds these three nucleotides in the order of C, C, and A to the tRNA nucleotide-73, using CTP and ATP as substrates and producing inorganic pyrophosphate. tRNA 3'-terminal CCA addition is required both for tRNA processing and repair. Also involved in tRNA surveillance by mediating tandem CCA addition to generate a CCACCA at the 3' terminus of unstable tRNAs. While stable tRNAs receive only 3'-terminal CCA, unstable tRNAs are marked with CCACCA and rapidly degraded. This Burkholderia lata (strain ATCC 17760 / DSM 23089 / LMG 22485 / NCIMB 9086 / R18194 / 383) protein is Multifunctional CCA protein.